The following is a 156-amino-acid chain: 6,7-dimethyl-8-ribityllumazine synthase (156 aa).

5-amino-6-(D-ribitylamino)uracil-binding positions include phenylalanine 22, 57-59 (AVE), and 81-83 (SVI). 86-87 (GT) provides a ligand contact to (2S)-2-hydroxy-3-oxobutyl phosphate. Catalysis depends on histidine 89, which acts as the Proton donor. Residue phenylalanine 114 participates in 5-amino-6-(D-ribitylamino)uracil binding. A (2S)-2-hydroxy-3-oxobutyl phosphate-binding site is contributed by arginine 128.

It belongs to the DMRL synthase family. In terms of assembly, forms an icosahedral capsid composed of 60 subunits, arranged as a dodecamer of pentamers.

It carries out the reaction (2S)-2-hydroxy-3-oxobutyl phosphate + 5-amino-6-(D-ribitylamino)uracil = 6,7-dimethyl-8-(1-D-ribityl)lumazine + phosphate + 2 H2O + H(+). Its pathway is cofactor biosynthesis; riboflavin biosynthesis; riboflavin from 2-hydroxy-3-oxobutyl phosphate and 5-amino-6-(D-ribitylamino)uracil: step 1/2. In terms of biological role, catalyzes the formation of 6,7-dimethyl-8-ribityllumazine by condensation of 5-amino-6-(D-ribitylamino)uracil with 3,4-dihydroxy-2-butanone 4-phosphate. This is the penultimate step in the biosynthesis of riboflavin. The protein is 6,7-dimethyl-8-ribityllumazine synthase of Aliivibrio fischeri (strain ATCC 700601 / ES114) (Vibrio fischeri).